Consider the following 179-residue polypeptide: uncharacterized protein (179 aa).

The next 3 helical transmembrane spans lie at 29–49 (LLGISFFCLVIIMATSLGPLI), 76–96 (AKHMLVFWMVFGILTSLDAYS), and 97–117 (GAIISFIPLWYTMKFFFLLWA).

The protein belongs to the DP1 family.

The protein localises to the membrane. This is an uncharacterized protein from Encephalitozoon cuniculi (strain GB-M1) (Microsporidian parasite).